Consider the following 311-residue polypeptide: Pyrimidine-specific ribonucleoside hydrolase RihA (311 aa).

The active site involves His240.

This sequence belongs to the IUNH family. RihA subfamily.

Its function is as follows. Hydrolyzes cytidine or uridine to ribose and cytosine or uracil, respectively. The sequence is that of Pyrimidine-specific ribonucleoside hydrolase RihA from Salmonella paratyphi C (strain RKS4594).